We begin with the raw amino-acid sequence, 374 residues long: Chaperone protein DnaJ (374 aa).

Positions 5-70 constitute a J domain; sequence DFYEILGVSK…EKRSAYDRMG (66 aa). Residues 133 to 211 form a CR-type zinc finger; that stretch reads GCKKEISFTA…CHGNGVKDKS (79 aa). Residues Cys-146, Cys-149, Cys-163, Cys-166, Cys-185, Cys-188, Cys-199, and Cys-202 each coordinate Zn(2+). CXXCXGXG motif repeat units lie at residues 146-153, 163-170, 185-192, and 199-206; these read CDTCDGKG, CQTCHGQG, CPHCGGTG, and CSDCHGNG.

It belongs to the DnaJ family. Homodimer. Zn(2+) is required as a cofactor.

The protein resides in the cytoplasm. Participates actively in the response to hyperosmotic and heat shock by preventing the aggregation of stress-denatured proteins and by disaggregating proteins, also in an autonomous, DnaK-independent fashion. Unfolded proteins bind initially to DnaJ; upon interaction with the DnaJ-bound protein, DnaK hydrolyzes its bound ATP, resulting in the formation of a stable complex. GrpE releases ADP from DnaK; ATP binding to DnaK triggers the release of the substrate protein, thus completing the reaction cycle. Several rounds of ATP-dependent interactions between DnaJ, DnaK and GrpE are required for fully efficient folding. Also involved, together with DnaK and GrpE, in the DNA replication of plasmids through activation of initiation proteins. This chain is Chaperone protein DnaJ, found in Psychrobacter arcticus (strain DSM 17307 / VKM B-2377 / 273-4).